We begin with the raw amino-acid sequence, 387 residues long: Short-chain dehydrogenase/reductase family 42E member 1 (387 aa).

Tyr-149 (proton acceptor) is an active-site residue. Lys-153 is a binding site for NAD(+). The next 2 membrane-spanning stretches (helical) occupy residues 279–299 (LPIS…FVVG) and 365–385 (ILDV…LPVV).

Belongs to the 3-beta-HSD family.

The protein resides in the membrane. The sequence is that of Short-chain dehydrogenase/reductase family 42E member 1 (sdr42e1) from Danio rerio (Zebrafish).